The following is a 345-amino-acid chain: Phosphoribosylformylglycinamidine cyclo-ligase (345 aa).

Belongs to the AIR synthase family.

Its subcellular location is the cytoplasm. The enzyme catalyses 2-formamido-N(1)-(5-O-phospho-beta-D-ribosyl)acetamidine + ATP = 5-amino-1-(5-phospho-beta-D-ribosyl)imidazole + ADP + phosphate + H(+). It participates in purine metabolism; IMP biosynthesis via de novo pathway; 5-amino-1-(5-phospho-D-ribosyl)imidazole from N(2)-formyl-N(1)-(5-phospho-D-ribosyl)glycinamide: step 2/2. The polypeptide is Phosphoribosylformylglycinamidine cyclo-ligase (Escherichia fergusonii (strain ATCC 35469 / DSM 13698 / CCUG 18766 / IAM 14443 / JCM 21226 / LMG 7866 / NBRC 102419 / NCTC 12128 / CDC 0568-73)).